The following is a 369-amino-acid chain: Anhydro-N-acetylmuramic acid kinase (369 aa).

12 to 19 serves as a coordination point for ATP; it reads GTSMDGID.

The protein belongs to the anhydro-N-acetylmuramic acid kinase family.

The enzyme catalyses 1,6-anhydro-N-acetyl-beta-muramate + ATP + H2O = N-acetyl-D-muramate 6-phosphate + ADP + H(+). It participates in amino-sugar metabolism; 1,6-anhydro-N-acetylmuramate degradation. It functions in the pathway cell wall biogenesis; peptidoglycan recycling. In terms of biological role, catalyzes the specific phosphorylation of 1,6-anhydro-N-acetylmuramic acid (anhMurNAc) with the simultaneous cleavage of the 1,6-anhydro ring, generating MurNAc-6-P. Is required for the utilization of anhMurNAc either imported from the medium or derived from its own cell wall murein, and thus plays a role in cell wall recycling. This is Anhydro-N-acetylmuramic acid kinase from Shewanella sediminis (strain HAW-EB3).